The chain runs to 377 residues: Putative glutamate--cysteine ligase 2 (377 aa).

This sequence belongs to the glutamate--cysteine ligase type 2 family. YbdK subfamily.

The catalysed reaction is L-cysteine + L-glutamate + ATP = gamma-L-glutamyl-L-cysteine + ADP + phosphate + H(+). ATP-dependent carboxylate-amine ligase which exhibits weak glutamate--cysteine ligase activity. This chain is Putative glutamate--cysteine ligase 2, found in Pseudomonas aeruginosa (strain ATCC 15692 / DSM 22644 / CIP 104116 / JCM 14847 / LMG 12228 / 1C / PRS 101 / PAO1).